Reading from the N-terminus, the 295-residue chain is Phosphatidylserine decarboxylase proenzyme (295 aa).

Active-site charge relay system; for autoendoproteolytic cleavage activity residues include D90 and S258. Residue S258 is the Schiff-base intermediate with substrate; via pyruvic acid; for decarboxylase activity of the active site. Pyruvic acid (Ser); by autocatalysis is present on S258.

It belongs to the phosphatidylserine decarboxylase family. PSD-B subfamily. Prokaryotic type I sub-subfamily. In terms of assembly, heterodimer of a large membrane-associated beta subunit and a small pyruvoyl-containing alpha subunit. Requires pyruvate as cofactor. Is synthesized initially as an inactive proenzyme. Formation of the active enzyme involves a self-maturation process in which the active site pyruvoyl group is generated from an internal serine residue via an autocatalytic post-translational modification. Two non-identical subunits are generated from the proenzyme in this reaction, and the pyruvate is formed at the N-terminus of the alpha chain, which is derived from the carboxyl end of the proenzyme. The autoendoproteolytic cleavage occurs by a canonical serine protease mechanism, in which the side chain hydroxyl group of the serine supplies its oxygen atom to form the C-terminus of the beta chain, while the remainder of the serine residue undergoes an oxidative deamination to produce ammonia and the pyruvoyl prosthetic group on the alpha chain. During this reaction, the Ser that is part of the protease active site of the proenzyme becomes the pyruvoyl prosthetic group, which constitutes an essential element of the active site of the mature decarboxylase.

It is found in the cell membrane. The catalysed reaction is a 1,2-diacyl-sn-glycero-3-phospho-L-serine + H(+) = a 1,2-diacyl-sn-glycero-3-phosphoethanolamine + CO2. It participates in phospholipid metabolism; phosphatidylethanolamine biosynthesis; phosphatidylethanolamine from CDP-diacylglycerol: step 2/2. In terms of biological role, catalyzes the formation of phosphatidylethanolamine (PtdEtn) from phosphatidylserine (PtdSer). This Blochmanniella pennsylvanica (strain BPEN) protein is Phosphatidylserine decarboxylase proenzyme.